The chain runs to 218 residues: Thiopurine S-methyltransferase (218 aa).

S-adenosyl-L-methionine-binding residues include W11, L46, E67, and R122.

It belongs to the class I-like SAM-binding methyltransferase superfamily. TPMT family.

It is found in the cytoplasm. The catalysed reaction is S-adenosyl-L-methionine + a thiopurine = S-adenosyl-L-homocysteine + a thiopurine S-methylether.. This Vibrio cholerae serotype O1 (strain ATCC 39315 / El Tor Inaba N16961) protein is Thiopurine S-methyltransferase.